The following is a 104-amino-acid chain: Large ribosomal subunit protein bL21 (104 aa).

It belongs to the bacterial ribosomal protein bL21 family. Part of the 50S ribosomal subunit. Contacts protein L20.

Functionally, this protein binds to 23S rRNA in the presence of protein L20. This is Large ribosomal subunit protein bL21 from Acidiphilium cryptum (strain JF-5).